The chain runs to 74 residues: Large ribosomal subunit protein bL31 (74 aa).

It belongs to the bacterial ribosomal protein bL31 family. Type A subfamily. As to quaternary structure, part of the 50S ribosomal subunit.

Its function is as follows. Binds the 23S rRNA. This is Large ribosomal subunit protein bL31 from Synechococcus sp. (strain JA-2-3B'a(2-13)) (Cyanobacteria bacterium Yellowstone B-Prime).